A 404-amino-acid chain; its full sequence is S-adenosylmethionine synthase (404 aa).

Position 17 (H17) interacts with ATP. Residue D19 coordinates Mg(2+). A K(+)-binding site is contributed by E45. Positions 58 and 101 each coordinate L-methionine. The flexible loop stretch occupies residues 101 to 111 (QSPDINRGVDR). ATP contacts are provided by residues 172 to 174 (DAK), 246 to 247 (RF), D255, 261 to 262 (RK), A278, and K282. D255 provides a ligand contact to L-methionine. L-methionine is bound at residue K286.

This sequence belongs to the AdoMet synthase family. In terms of assembly, homotetramer; dimer of dimers. The cofactor is Mg(2+). It depends on K(+) as a cofactor.

The protein localises to the cytoplasm. The enzyme catalyses L-methionine + ATP + H2O = S-adenosyl-L-methionine + phosphate + diphosphate. The protein operates within amino-acid biosynthesis; S-adenosyl-L-methionine biosynthesis; S-adenosyl-L-methionine from L-methionine: step 1/1. Functionally, catalyzes the formation of S-adenosylmethionine (AdoMet) from methionine and ATP. The overall synthetic reaction is composed of two sequential steps, AdoMet formation and the subsequent tripolyphosphate hydrolysis which occurs prior to release of AdoMet from the enzyme. The chain is S-adenosylmethionine synthase from Chlorobaculum tepidum (strain ATCC 49652 / DSM 12025 / NBRC 103806 / TLS) (Chlorobium tepidum).